Here is a 160-residue protein sequence, read N- to C-terminus: Xanthine-guanine phosphoribosyltransferase (160 aa).

5-phospho-alpha-D-ribose 1-diphosphate contacts are provided by residues 41–42 and 93–101; these read RG and DDLVDTGRT. Aspartate 94 is a binding site for Mg(2+). Residues aspartate 97 and isoleucine 140 each contribute to the guanine site. Aspartate 97 and isoleucine 140 together coordinate xanthine. GMP contacts are provided by residues 97 to 101 and 139 to 140; these read DTGRT and WI.

This sequence belongs to the purine/pyrimidine phosphoribosyltransferase family. XGPT subfamily. In terms of assembly, homotetramer. It depends on Mg(2+) as a cofactor.

It is found in the cell inner membrane. The enzyme catalyses GMP + diphosphate = guanine + 5-phospho-alpha-D-ribose 1-diphosphate. The catalysed reaction is XMP + diphosphate = xanthine + 5-phospho-alpha-D-ribose 1-diphosphate. It catalyses the reaction IMP + diphosphate = hypoxanthine + 5-phospho-alpha-D-ribose 1-diphosphate. The protein operates within purine metabolism; GMP biosynthesis via salvage pathway; GMP from guanine: step 1/1. It functions in the pathway purine metabolism; XMP biosynthesis via salvage pathway; XMP from xanthine: step 1/1. In terms of biological role, purine salvage pathway enzyme that catalyzes the transfer of the ribosyl-5-phosphate group from 5-phospho-alpha-D-ribose 1-diphosphate (PRPP) to the N9 position of the 6-oxopurines guanine and xanthine to form the corresponding ribonucleotides GMP (guanosine 5'-monophosphate) and XMP (xanthosine 5'-monophosphate), with the release of PPi. To a lesser extent, also acts on hypoxanthine. This is Xanthine-guanine phosphoribosyltransferase from Desulfotalea psychrophila (strain LSv54 / DSM 12343).